A 126-amino-acid polypeptide reads, in one-letter code: Acidic phospholipase A2 4 (126 aa).

Residue serine 1 is a signal peptide. A propeptide spanning residues 2–7 (NRPMPL) is cleaved from the precursor. 7 disulfide bridges follow: cysteine 18–cysteine 78, cysteine 33–cysteine 125, cysteine 35–cysteine 51, cysteine 50–cysteine 106, cysteine 57–cysteine 99, cysteine 67–cysteine 92, and cysteine 85–cysteine 97. Residues tyrosine 34, glycine 36, and glycine 38 each coordinate Ca(2+). Histidine 54 is a catalytic residue. Aspartate 55 is a Ca(2+) binding site. The active site involves aspartate 100.

Belongs to the phospholipase A2 family. Group I subfamily. D49 sub-subfamily. In terms of assembly, monomer. Ca(2+) serves as cofactor. Expressed by the venom gland.

It localises to the secreted. It catalyses the reaction a 1,2-diacyl-sn-glycero-3-phosphocholine + H2O = a 1-acyl-sn-glycero-3-phosphocholine + a fatty acid + H(+). Its function is as follows. Snake venom phospholipase A2 (PLA2) that exhibits strong anticoagulant activity, which is not due to the catalytic activity. PLA2 catalyzes the calcium-dependent hydrolysis of the 2-acyl groups in 3-sn-phosphoglycerides. The sequence is that of Acidic phospholipase A2 4 from Naja sagittifera (Andaman cobra).